The primary structure comprises 300 residues: Tyrosine recombinase XerD (300 aa).

The region spanning 6 to 89 is the Core-binding (CB) domain; that stretch reads LFHKRLIEQF…ALKVFFHFLK (84 aa). The Tyr recombinase domain occupies 108 to 293; sequence RLPSILSTEE…ASESLIEKFH (186 aa). Catalysis depends on residues arginine 152, lysine 174, histidine 245, arginine 248, and histidine 271. Tyrosine 280 functions as the O-(3'-phospho-DNA)-tyrosine intermediate in the catalytic mechanism.

Belongs to the 'phage' integrase family. XerD subfamily. Forms a cyclic heterotetrameric complex composed of two molecules of XerC and two molecules of XerD.

It localises to the cytoplasm. In terms of biological role, site-specific tyrosine recombinase, which acts by catalyzing the cutting and rejoining of the recombining DNA molecules. The XerC-XerD complex is essential to convert dimers of the bacterial chromosome into monomers to permit their segregation at cell division. It also contributes to the segregational stability of plasmids. This chain is Tyrosine recombinase XerD, found in Chlamydia trachomatis serovar D (strain ATCC VR-885 / DSM 19411 / UW-3/Cx).